Reading from the N-terminus, the 102-residue chain is Phosphoribosyl-ATP pyrophosphatase (102 aa).

The protein belongs to the PRA-PH family.

The protein localises to the cytoplasm. The catalysed reaction is 1-(5-phospho-beta-D-ribosyl)-ATP + H2O = 1-(5-phospho-beta-D-ribosyl)-5'-AMP + diphosphate + H(+). Its pathway is amino-acid biosynthesis; L-histidine biosynthesis; L-histidine from 5-phospho-alpha-D-ribose 1-diphosphate: step 2/9. The sequence is that of Phosphoribosyl-ATP pyrophosphatase from Ignicoccus hospitalis (strain KIN4/I / DSM 18386 / JCM 14125).